Consider the following 20-residue polypeptide: Putative serine protease (20 aa).

It belongs to the peptidase S1 family.

It is found in the secreted. Binds the A.niger cell wall component alpha-1,3-glucan, a fungal pathogen-associated molecular pattern (PAMP) that activates the host immune response. The protein is Putative serine protease of Galleria mellonella (Greater wax moth).